Reading from the N-terminus, the 64-residue chain is Large ribosomal subunit protein bL35c (64 aa).

The protein belongs to the bacterial ribosomal protein bL35 family.

It is found in the plastid. The protein localises to the chloroplast. The chain is Large ribosomal subunit protein bL35c from Cyanidium caldarium (Red alga).